The sequence spans 335 residues: Biotin synthase (335 aa).

Positions 51–278 (NTVQLSSLLS…LAKVRLSAGR (228 aa)) constitute a Radical SAM core domain. Positions 66, 70, and 73 each coordinate [4Fe-4S] cluster. The [2Fe-2S] cluster site is built by C110, C141, C201, and R273.

It belongs to the radical SAM superfamily. Biotin synthase family. In terms of assembly, homodimer. It depends on [4Fe-4S] cluster as a cofactor. [2Fe-2S] cluster serves as cofactor.

The catalysed reaction is (4R,5S)-dethiobiotin + (sulfur carrier)-SH + 2 reduced [2Fe-2S]-[ferredoxin] + 2 S-adenosyl-L-methionine = (sulfur carrier)-H + biotin + 2 5'-deoxyadenosine + 2 L-methionine + 2 oxidized [2Fe-2S]-[ferredoxin]. It functions in the pathway cofactor biosynthesis; biotin biosynthesis; biotin from 7,8-diaminononanoate: step 2/2. In terms of biological role, catalyzes the conversion of dethiobiotin (DTB) to biotin by the insertion of a sulfur atom into dethiobiotin via a radical-based mechanism. The polypeptide is Biotin synthase (Bordetella pertussis (strain Tohama I / ATCC BAA-589 / NCTC 13251)).